A 398-amino-acid polypeptide reads, in one-letter code: Acetate kinase 1 (398 aa).

Residue asparagine 10 coordinates Mg(2+). Lysine 17 serves as a coordination point for ATP. Arginine 89 lines the substrate pocket. Catalysis depends on aspartate 146, which acts as the Proton donor/acceptor. Residues 206–210 (HLGNG), 281–283 (DCR), and 329–333 (GIGEN) each bind ATP. Mg(2+) is bound at residue glutamate 384.

Belongs to the acetokinase family. In terms of assembly, homodimer. Mg(2+) is required as a cofactor. Requires Mn(2+) as cofactor.

It is found in the cytoplasm. The catalysed reaction is acetate + ATP = acetyl phosphate + ADP. The protein operates within metabolic intermediate biosynthesis; acetyl-CoA biosynthesis; acetyl-CoA from acetate: step 1/2. Its function is as follows. Catalyzes the formation of acetyl phosphate from acetate and ATP. Can also catalyze the reverse reaction. In Neisseria meningitidis serogroup A / serotype 4A (strain DSM 15465 / Z2491), this protein is Acetate kinase 1.